The sequence spans 185 residues: Ribosome-recycling factor (185 aa).

The tract at residues 140 to 168 is disordered; sequence KKEQKDGNITEDEQRNLEKQVQKITDDST.

The protein belongs to the RRF family.

The protein resides in the cytoplasm. Functionally, responsible for the release of ribosomes from messenger RNA at the termination of protein biosynthesis. May increase the efficiency of translation by recycling ribosomes from one round of translation to another. This Lactobacillus helveticus (strain DPC 4571) protein is Ribosome-recycling factor.